The chain runs to 576 residues: Proline--tRNA ligase (576 aa).

This sequence belongs to the class-II aminoacyl-tRNA synthetase family. ProS type 1 subfamily. As to quaternary structure, homodimer.

The protein resides in the cytoplasm. The catalysed reaction is tRNA(Pro) + L-proline + ATP = L-prolyl-tRNA(Pro) + AMP + diphosphate. Catalyzes the attachment of proline to tRNA(Pro) in a two-step reaction: proline is first activated by ATP to form Pro-AMP and then transferred to the acceptor end of tRNA(Pro). As ProRS can inadvertently accommodate and process non-cognate amino acids such as alanine and cysteine, to avoid such errors it has two additional distinct editing activities against alanine. One activity is designated as 'pretransfer' editing and involves the tRNA(Pro)-independent hydrolysis of activated Ala-AMP. The other activity is designated 'posttransfer' editing and involves deacylation of mischarged Ala-tRNA(Pro). The misacylated Cys-tRNA(Pro) is not edited by ProRS. This chain is Proline--tRNA ligase, found in Leptospira interrogans serogroup Icterohaemorrhagiae serovar Lai (strain 56601).